A 401-amino-acid chain; its full sequence is Large ribosomal subunit protein uL3 (401 aa).

Positions 1-21 (MSHRKFSAPRHGHMGFTPKKR) are disordered.

The protein belongs to the universal ribosomal protein uL3 family.

Its subcellular location is the cytoplasm. Functionally, the L3 protein is a component of the large subunit of cytoplasmic ribosomes. The chain is Large ribosomal subunit protein uL3 (rpl-3) from Caenorhabditis briggsae.